The sequence spans 217 residues: Small ribosomal subunit protein uS3 (217 aa).

One can recognise a KH type-2 domain in the interval 40–110 (IRDLINKGFN…EVYINIHEVR (71 aa)).

The protein belongs to the universal ribosomal protein uS3 family. Part of the 30S ribosomal subunit. Forms a tight complex with proteins S10 and S14.

Its function is as follows. Binds the lower part of the 30S subunit head. Binds mRNA in the 70S ribosome, positioning it for translation. The sequence is that of Small ribosomal subunit protein uS3 from Rickettsia felis (strain ATCC VR-1525 / URRWXCal2) (Rickettsia azadi).